Here is a 381-residue protein sequence, read N- to C-terminus: Cytosolic acyl coenzyme A thioester hydrolase (381 aa).

A HotDog ACOT-type 1 domain is found at 51-169 (PGHCIAMGRI…TLWYVPLSLK (119 aa)). Asparagine 67 is a catalytic residue. An N6-acetyllysine mark is found at lysine 169 and lysine 199. One can recognise a HotDog ACOT-type 2 domain in the interval 225–339 (SYSQSSLIHL…FFTYVSLNQE (115 aa)). Aspartate 256 is a catalytic residue. An N6-acetyllysine modification is found at lysine 284. The segment at 343–381 (LPVPQLVPETEDEKKRFEEGKGRYLQMKAKRQGHTEPQP) is disordered. A compositionally biased stretch (basic and acidic residues) spans 354 to 364 (DEKKRFEEGKG).

As to quaternary structure, homohexamer. Post-translationally, the N-terminus is blocked. Isoform 1 is expressed constitutively in brain and testis. Isoform 2 is induced in liver by treatment with the peroxisome proliferator.

It localises to the cytoplasm. The protein localises to the cytosol. The enzyme catalyses hexadecanoyl-CoA + H2O = hexadecanoate + CoA + H(+). It carries out the reaction dodecanoyl-CoA + H2O = dodecanoate + CoA + H(+). The catalysed reaction is tetradecanoyl-CoA + H2O = tetradecanoate + CoA + H(+). It catalyses the reaction decanoyl-CoA + H2O = decanoate + CoA + H(+). The enzyme catalyses octanoyl-CoA + H2O = octanoate + CoA + H(+). It carries out the reaction octadecanoyl-CoA + H2O = octadecanoate + CoA + H(+). The catalysed reaction is (9Z)-octadecenoyl-CoA + H2O = (9Z)-octadecenoate + CoA + H(+). It functions in the pathway lipid metabolism; fatty acid metabolism. Catalyzes the hydrolysis of acyl-CoAs into free fatty acids and coenzyme A (CoASH), regulating their respective intracellular levels. Preferentially hydrolyzes palmitoyl-CoA, but has a broad specificity acting on other fatty acyl-CoAs with chain-lengths of C8-C18. May play an important physiological function in brain. The polypeptide is Cytosolic acyl coenzyme A thioester hydrolase (Acot7) (Rattus norvegicus (Rat)).